The chain runs to 1915 residues: Protein NLRC5 (1915 aa).

The segment at 103–137 (LGAGEESCPGPQLYHGAKRPFQSYGSSPRRKNSKK) is disordered. Residues 223–542 (RVTVLLGKAG…HTVDKDTLVE (320 aa)) enclose the NACHT domain. 229 to 236 (GKAGMGKT) contacts ATP. LRR repeat units follow at residues 622-646 (VAET…SFHN), 716-740 (MGSL…LIQT), 744-771 (CSQL…LLPS), 772-796 (LPKL…LVKV), 871-898 (SPQL…AASQ), 900-923 (HIAQ…VLKA), 930-953 (LEDL…PREQ), 1006-1033 (THNL…LLPG), 1034-1055 (LGPL…VFSL), 1138-1161 (EVQL…LPQL), 1162-1184 (PQLS…LLAD), 1240-1263 (CNAL…CLLE), 1265-1292 (LPQL…LLET), 1348-1371 (AQQL…MLLN), 1481-1504 (SKLL…FSQV), 1519-1542 (CHHL…LLMG), 1552-1575 (KLHL…LSRM), 1576-1598 (TLLQ…CLAA), 1603-1626 (LPEL…CLAA), 1631-1654 (LPEL…CLAA), 1659-1682 (LPEL…CLAA), 1687-1711 (LPEL…LVKS), 1715-1738 (FEHL…ELAQ), 1741-1768 (PPQL…ALEQ), 1769-1795 (CPHI…RLPL), 1821-1845 (FPAL…LAQV), and 1849-1872 (MGQL…LLAQ).

It belongs to the NLRP family. Interacts with CHUK and IKBKB; prevents CHUK and IKBKB phosphorylation and inhibits their kinase activity. Interacts with RIGI and IFIH1; blocks the interaction of MAVS to RIGI. As to expression, expressed in spleen, thymus and lung.

It is found in the cytoplasm. Probable regulator of the NF-kappa-B and type I interferon signaling pathways. May also regulate the type II interferon signaling pathway. Plays a role in homeostatic control of innate immunity and in antiviral defense mechanisms. This is Protein NLRC5 (Nlrc5) from Mus musculus (Mouse).